We begin with the raw amino-acid sequence, 98 residues long: Complement inhibitor RaCI1 (98 aa).

The N-terminal stretch at Met-1–Thr-20 is a signal peptide. 3 disulfides stabilise this stretch: Cys-33/Cys-57, Cys-38/Cys-59, and Cys-53/Cys-74. The interval Thr-79–Asn-98 is disordered. Basic and acidic residues predominate over residues Asp-88 to Asn-98.

Belongs to the RaCI family. Expressed in salivary glands.

It localises to the secreted. In terms of biological role, complement inhibitor. Prevents complement-mediated C5 activation by binding to C5. Binds C5 at a different binding site than the other tick complement inhibitors OmCI and CirpT1, and the drug eculizumab. Inhibits the complement in human and guinea pig but not in other species tested (rabbit, rat, mouse, and pig). The protein is Complement inhibitor RaCI1 of Rhipicephalus appendiculatus (Brown ear tick).